Here is a 341-residue protein sequence, read N- to C-terminus: Malate dehydrogenase 2, mitochondrial (341 aa).

Residues 1 to 22 (MFRSMIVRSASPVKQGLLRRGF) constitute a mitochondrion transit peptide. NAD(+) is bound by residues 36-42 (GAAGGIG) and D62. Residues R109 and R115 each contribute to the substrate site. NAD(+) contacts are provided by residues N122 and 145–147 (ISN). Substrate-binding residues include N147 and R181. H205 (proton acceptor) is an active-site residue. NAD(+) is bound at residue M256.

This sequence belongs to the LDH/MDH superfamily. MDH type 1 family. Homodimer. Expressed in rosette leaves at low levels.

The protein localises to the mitochondrion matrix. The enzyme catalyses (S)-malate + NAD(+) = oxaloacetate + NADH + H(+). Catalyzes a reversible NAD-dependent dehydrogenase reaction involved in central metabolism and redox homeostasis between organelle compartments. Required for carbon dioxide and energy partitioning in leaves. May limit photorespiration during the dark phase. Can convert 2-ketoglutarate to L-2-hydroxyglutarate in vitro. The protein is Malate dehydrogenase 2, mitochondrial of Arabidopsis thaliana (Mouse-ear cress).